The following is a 678-amino-acid chain: MFQDNPRLAQLKQKIQETLPKKEGTIKASDKGFGFLEVDSKTSYFVPPPYMKKCMHGDKVVAFIRTENEREVAEPSELIEQSLTRFIGRVKLFKGKLNVAPDHPQLKKLSLKAKTKKGLNEADFQEGDWVVAHLVRHPLKGDDGFFVQISHKITDANDKIAPWWVTLAENDLPNSEPAGIDDWQLKDDADLVREDLTALPFVTIDGESTKDMDDALYAQQLPNGDFALTIAIADPTAYITPEDEMDKVARERGFTIYLPGRNIPMLPRDLADELCSLMENQVRPALCCSVTIRKDGVIGDDIRFFAANIKSHARLVYDHVSDWLETGSSEQWQPSEEIAQVVRDLYAFSQARANWCETHAVVFPDRPDYRFELSADNDVVAIHADMRRTANRLVEESMITANICAGKTLQTTFGFGVFNTHAGFKAEKMADVVELMAVNGAPNADAETLATVEGFAALRRWLATQETSYLDNRIRKYQSYSEIGNQPLPHFAMGLDVYATWTSPIRKYGDMINHRLLKAHILGKAPVQTPDETVGEELALHRKHHKIAERNVADWLYARTLADEPAKETRFQAEIFDINRPGMRVRLLENGAMAFIPGALILDNKERIECNGEDGTILIDKEVVYKLGDVLEIVLTEVNQENRSLVGKPTQVFADLVSETQTSTEQPAEGAENNEPQA.

Residues 193-521 enclose the RNB domain; the sequence is REDLTALPFV…INHRLLKAHI (329 aa). An S1 motif domain is found at 568–650; it reads ETRFQAEIFD…ENRSLVGKPT (83 aa). Residues 658–678 form a disordered region; sequence SETQTSTEQPAEGAENNEPQA.

It belongs to the RNR ribonuclease family. RNase II subfamily.

The protein resides in the cytoplasm. It carries out the reaction Exonucleolytic cleavage in the 3'- to 5'-direction to yield nucleoside 5'-phosphates.. Functionally, involved in mRNA degradation. Hydrolyzes single-stranded polyribonucleotides processively in the 3' to 5' direction. The polypeptide is Exoribonuclease 2 (Vibrio cholerae serotype O1 (strain ATCC 39541 / Classical Ogawa 395 / O395)).